A 109-amino-acid chain; its full sequence is Cytochrome bo(3) ubiquinol oxidase subunit 4 (109 aa).

The Cytoplasmic portion of the chain corresponds to 1 to 17 (MSHSTDHSGASHGSVKT). The chain crosses the membrane as a helical span at residues 18–36 (YMTGFILSIILTVIPFWMV). Over 37 to 45 (MTGAASPAV) the chain is Periplasmic. A helical transmembrane segment spans residues 46–64 (ILGTILAMAVVQVLVHLVC). Over 65-80 (FLHMNTKSDEGWNMTA) the chain is Cytoplasmic. The helical transmembrane segment at 81 to 99 (FVFTVLIIAILVVGSIWIM) threads the bilayer. Residues 100–109 (WNLNYNMMMH) are Periplasmic-facing.

The protein belongs to the cytochrome c oxidase bacterial subunit 4 family. In terms of assembly, heterooctamer of two A chains, two B chains, two C chains and two D chains.

Its subcellular location is the cell inner membrane. In terms of biological role, cytochrome bo(3) ubiquinol terminal oxidase is the component of the aerobic respiratory chain of E.coli that predominates when cells are grown at high aeration. Has proton pump activity across the membrane in addition to electron transfer, pumping 2 protons/electron. This Escherichia coli O157:H7 protein is Cytochrome bo(3) ubiquinol oxidase subunit 4 (cyoD).